Reading from the N-terminus, the 92-residue chain is DNA/RNA-binding protein Alba (92 aa).

Lysine 11 carries the N6-acetyllysine modification.

Belongs to the histone-like Alba family. Acetylated. Acetylation at Lys-11 decreases DNA-binding affinity.

It localises to the cytoplasm. It is found in the chromosome. Functionally, binds double-stranded DNA tightly but without sequence specificity. Involved in DNA compaction. This is DNA/RNA-binding protein Alba from Pyrobaculum aerophilum (strain ATCC 51768 / DSM 7523 / JCM 9630 / CIP 104966 / NBRC 100827 / IM2).